The sequence spans 36 residues: Neuropeptide F (36 aa).

Position 36 is a phenylalanine amide (Phe-36).

The protein belongs to the NPY family. As to expression, central and peripheral nervous system, and muscular pharynx.

The protein localises to the secreted. In terms of biological role, may perform an important neurotransmitter function and may regulate muscular activity. In Arthurdendyus triangulatus (New Zealand flatworm), this protein is Neuropeptide F.